The primary structure comprises 196 residues: Calcium channel flower (196 aa).

Transmembrane regions (helical) follow at residues 35–55 (LGIV…LSII), 70–92 (LAGF…QVGS), and 113–133 (AVPP…GLIF).

The protein belongs to the calcium channel flower family. As to quaternary structure, homomultimer. Associates with the dally/ magu complex.

The protein localises to the cell membrane. Its subcellular location is the cytoplasmic vesicle. The protein resides in the secretory vesicle. It localises to the synaptic vesicle membrane. It is found in the presynaptic cell membrane. The protein localises to the endosome. Channel activity is inhibited by La(3+), which reduces Ca(2+) influx and thus inhibits it's function in promoting activity-dependent bulk endocytosis (ADBE) in response to high stimuli. Its function is as follows. Transmembrane protein which mediates synaptic endocytosis, fitness-based cell culling, neuronal culling, morphogen gradient scaling, and calcium transport. Regulates synaptic endocytosis and hence couples exo- with endocytosis. Controls two major modes of synaptic vesicle (SV) endocytosis in the synaptic boutons of neuromuscular junctions (NMJs); Ca(2+) channel-independent Clathrin-mediated endocytosis (CME) in response to mild stimulation, and Ca(2+) channel-dependent activity-dependent bulk endocytosis (ADBE) in response to strong stimulation. Functions in ADBE and subsequent SV reformation from bulk endosomes by initiating Ca(2+) channel-dependent phosphatidylinositol 4,5-bisphosphate (PtdIns(4,5)P2) compartmentalization in synaptic boutons. There it acts at the periactive zone to provide the low Ca(2+) levels required to initiate Calcineurin activation and upregulate PtdIns(4,5)P2. Conversely PtdIns(4,5)P2 enhances fwe Ca(2+) channel-activity, establishing a positive feedback loop that induces PtdIns(4,5)P2 microdomain at the periactive zone. These microdomains trigger bulk membrane invagination (i.e. ADBE) by triggering actin polymerization while also promoting localization of fwe to bulk endosomes, thereby removing the ADBE trigger to reduce endocytosis and prevent excess membrane uptake. PtdIns(4,5)P2 then promotes SV reformation from the bulk endosomes, to coordinate ADBE and subsequent SV reformation. Different combinations of the flower isoforms at the cell membrane are also required for the identification and elimination of suboptimal or supernumerary cells during development, regeneration, and adulthood. Required for the recognition and elimination of unfit cells in the developing wing during cell competition. In the developing pupal retina, mediates the elimination of unwanted postmitotic neurons, including supernumerary photoreceptor neurons that form at the periphery of the retina and are contained within incomplete ommatidia units. Also required for efficient elimination and replacement of old neurons by newly generated neurons during regeneration in the adult brain following mechanical injury. Downstream of the flower fitness fingerprints, cells identified as unwanted or unfit are eliminated via apoptosis through the expression of ahuizotl (azot). However, the cells marked for elimination by the flower isoforms only undergo apoptosis if additional thresholds are met; (1) their neighboring fit/healthy cells express different levels of the fwe isoforms, and (2) the levels of the protective signal SPARC expressed by the loser or unwanted cells are unable to inhibit caspase activation. These additional thresholds for flower-mediated apoptosis, allows useful cells to recover from transient and limited stress before they are unnecessarily eliminated. Functions with dally and magu in a mechanism of scaling, which utilises apoptosis to ensure that the dpp morphogen gradient, which mediates organ growth, remains proportional to the size of the growing wing. In this mechanism, fwe represses dally- and Magu-dependent activity in expanding the gradient, and dally/Magu inhibits fwe-dependent apoptosis to keep cell death rate low. When the levels of these different proteins are optimally regulated the gradient correctly scales with organ growth but when this fails, fwe-mediated apoptosis is activated to trim the developing tissue to match the correct size of the gradient. The sequence is that of Calcium channel flower from Drosophila grimshawi (Hawaiian fruit fly).